A 647-amino-acid polypeptide reads, in one-letter code: Threonine--tRNA ligase (647 aa).

The 61-residue stretch at 1–61 (MIKITFPDGA…EEDGSIEIVT (61 aa)) folds into the TGS domain. Residues 240–538 (DHRKLGKELD…LIETYKGAFP (299 aa)) form a catalytic region. The Zn(2+) site is built by Cys334, His385, and His515.

Belongs to the class-II aminoacyl-tRNA synthetase family. In terms of assembly, homodimer. Zn(2+) serves as cofactor.

It localises to the cytoplasm. The enzyme catalyses tRNA(Thr) + L-threonine + ATP = L-threonyl-tRNA(Thr) + AMP + diphosphate + H(+). Functionally, catalyzes the attachment of threonine to tRNA(Thr) in a two-step reaction: L-threonine is first activated by ATP to form Thr-AMP and then transferred to the acceptor end of tRNA(Thr). Also edits incorrectly charged L-seryl-tRNA(Thr). The chain is Threonine--tRNA ligase from Streptococcus pyogenes serotype M3 (strain ATCC BAA-595 / MGAS315).